Reading from the N-terminus, the 428-residue chain is Histone-lysine N-methyltransferase SMYD3 (428 aa).

Methionine 1 is subject to N-acetylmethionine. The SET domain maps to 4 to 240 (LKVEKFTTAN…AGEELTICYL (237 aa)). 14–16 (RGN) is an S-adenosyl-L-methionine binding site. Residues cysteine 49, cysteine 52, cysteine 62, cysteine 65, cysteine 71, cysteine 75, histidine 83, and cysteine 87 each coordinate Zn(2+). An MYND-type zinc finger spans residues 49-87 (CDRCLLGKEKLMRCSQCRIAKYCSAKCQKKAWPDHRREC). Residues tyrosine 124, asparagine 132, 205-206 (NH), tyrosine 239, and phenylalanine 259 each bind S-adenosyl-L-methionine. The interval 272-428 (DADMLTGDEQ…EECDANIRAS (157 aa)) is C-terminal domain; essential for histone methyltransferase activity, nuclear localization and mediates interaction with HSP90AA1.

This sequence belongs to the class V-like SAM-binding methyltransferase superfamily. Histone-lysine methyltransferase family. Interacts with HSPCA. Interacts with HELZ. Interacts with POLR2A; the interaction may be indirect and may be mediated by HELZ. Interacts with HSP90AA1; this interaction enhances SMYD3 histone-lysine N-methyltransferase.

It is found in the cytoplasm. Its subcellular location is the nucleus. The catalysed reaction is L-lysyl(4)-[histone H3] + 3 S-adenosyl-L-methionine = N(6),N(6),N(6)-trimethyl-L-lysyl(4)-[histone H3] + 3 S-adenosyl-L-homocysteine + 3 H(+). With respect to regulation, histone methyltransferase activity strongly stimulated by HSPCA. Its function is as follows. Histone methyltransferase. Specifically methylates 'Lys-4' of histone H3, inducing di- and tri-methylation, but not monomethylation. Also methylates 'Lys-5' of histone H4. Plays an important role in transcriptional activation as a member of an RNA polymerase complex. Binds DNA containing 5'-CCCTCC-3' or 5'-GAGGGG-3' sequences. In Mus musculus (Mouse), this protein is Histone-lysine N-methyltransferase SMYD3 (Smyd3).